Reading from the N-terminus, the 703-residue chain is MAAQAAGVSRQRAATQGLGSNQNALKYLGQDFKTLRQQCLDSGVLFKDPEFPACPSALGYKDLGPGSPQTQGIIWKRPTELCPSPQFIVGGATRTDICQGGLGDCWLLAAIASLTLNEELLYRVVPRDQDFQENYAGIFHFQFWQYGEWVEVVIDDRLPTKNGQLLFLHSEQGNEFWSALLEKAYAKLNGCYEALAGGSTVEGFEDFTGGISEFYDLKKPPANLYQIIRKALCAGSLLGCSIDVSSAAEAEAITSQKLVKSHAYSVTGVEEVNFQGHPEKLIRLRNPWGEVEWSGAWSDDAPEWNHIDPRRKEELDKKVEDGEFWMSLSDFVRQFSRLEICNLSPDSLSSEEVHKWNLVLFNGHWTRGSTAGGCQNYPATYWTNPQFKIRLDEVDEDQEESIGEPCCTVLLGLMQKNRRWRKRIGQGMLSIGYAVYQVPKELESHTDAHLGRDFFLAYQPSARTSTYVNLREVSGRARLPPGEYLVVPSTFEPFKDGEFCLRVFSEKKAQALEIGDVVAGNPYEPHPSEVDQEDDQFRRLFEKLAGKDSEITANALKILLNEAFSKRTDIKFDGFNINTCREMISLLDSNGTGTLGAVEFKTLWLKIQKYLEIYWETDYNHSGTIDAHEMRTALRKAGFTLNSQVQQTIALRYACSKLGINFDSFVACMIRLETLFKLFSLLDEDKDGMVQLSLAEWLCCVLV.

The Calpain catalytic domain maps to Leu45 to Ser344. Active-site residues include Cys105, His262, and Asn286. The interval Trp356–Ala379 is domain III. EF-hand domains are found at residues Phe575–Tyr610, Asp618–Thr640, and Ile670–Val703. Residues Asp588, Asn590, Thr592, Thr594, Glu599, Asp618, Asn620, Ser622, Thr624, and Glu629 each contribute to the Ca(2+) site.

This sequence belongs to the peptidase C2 family. As to quaternary structure, monomer and homooligomer. Interacts with COPS1/GPS1, COPB1, EYA2, NME2, NME4 and TOMM70. Ca(2+) is required as a cofactor. Undergoes autolytic cleavage between Ala-5 and Ala-6 which gives rise to fragments extending from Ala-6 to the C-terminus, Ala-6 to the EF-hand 2 domain and from Ala-6 to the beginning of domain III. As to expression, stomach.

The protein localises to the cytoplasm. It localises to the golgi apparatus. The catalysed reaction is Broad endopeptidase specificity.. Calcium-regulated non-lysosomal thiol-protease. Involved in membrane trafficking in the gastric surface mucus cells (pit cells) and may involve the membrane trafficking of mucus cells via interactions with coat protein. Proteolytically cleaves the beta-subunit of coatomer complex. This chain is Calpain-8 (CAPN8), found in Homo sapiens (Human).